The primary structure comprises 133 residues: Peptide methionine sulfoxide reductase MsrB (133 aa).

The 123-residue stretch at 8–130 (LEEWRAMLDP…NSVCLDFKPR (123 aa)) folds into the MsrB domain. The Zn(2+) site is built by cysteine 47, cysteine 50, cysteine 96, and cysteine 99. Catalysis depends on cysteine 119, which acts as the Nucleophile.

The protein belongs to the MsrB Met sulfoxide reductase family. Zn(2+) is required as a cofactor.

It carries out the reaction L-methionyl-[protein] + [thioredoxin]-disulfide + H2O = L-methionyl-(R)-S-oxide-[protein] + [thioredoxin]-dithiol. In Pseudomonas putida (strain W619), this protein is Peptide methionine sulfoxide reductase MsrB.